Here is a 319-residue protein sequence, read N- to C-terminus: Transaldolase (319 aa).

The Schiff-base intermediate with substrate role is filled by Lys-125.

The protein belongs to the transaldolase family. Type 1 subfamily. Homodimer.

Its subcellular location is the cytoplasm. The catalysed reaction is D-sedoheptulose 7-phosphate + D-glyceraldehyde 3-phosphate = D-erythrose 4-phosphate + beta-D-fructose 6-phosphate. It functions in the pathway carbohydrate degradation; pentose phosphate pathway; D-glyceraldehyde 3-phosphate and beta-D-fructose 6-phosphate from D-ribose 5-phosphate and D-xylulose 5-phosphate (non-oxidative stage): step 2/3. In terms of biological role, transaldolase is important for the balance of metabolites in the pentose-phosphate pathway. In Ralstonia pickettii (strain 12J), this protein is Transaldolase.